The sequence spans 260 residues: MSPVQPLAGRQAADDPLIRLQEVAVTFGGRSILQDVRLEVVPGRITTLVGNNGAGKTTLLRVVVGLTHTAAGRVWRAPQVRIGYVPQHFSVDANLPITARRFMALSGRANAARWQEVVADTGVEELLDQPLQGLSGGEMRRILLARALLQHPSVLALDEPAAGLDGRSQGALYRLIGTLRQRYGCAVVIISHDLNLVMAASDEVLCLEHGRIACRGAPASVIEHPEYQKLFGSHLGPDTGVFPHDHHDHSGPALAGGGRG.

The 217-residue stretch at 18-234 folds into the ABC transporter domain; it reads IRLQEVAVTF…PEYQKLFGSH (217 aa). 50-57 lines the ATP pocket; sequence GNNGAGKT. The interval 241-260 is disordered; it reads VFPHDHHDHSGPALAGGGRG.

The protein belongs to the ABC transporter superfamily. Zinc importer (TC 3.A.1.15.5) family. In terms of assembly, the complex is composed of two ATP-binding proteins (ZnuC), two transmembrane proteins (ZnuB) and a solute-binding protein (ZnuA).

It localises to the cell inner membrane. It catalyses the reaction Zn(2+)(out) + ATP(in) + H2O(in) = Zn(2+)(in) + ADP(in) + phosphate(in) + H(+)(in). Part of the ABC transporter complex ZnuABC involved in zinc import. Responsible for energy coupling to the transport system. In Halorhodospira halophila (strain DSM 244 / SL1) (Ectothiorhodospira halophila (strain DSM 244 / SL1)), this protein is Zinc import ATP-binding protein ZnuC.